The following is a 105-amino-acid chain: Plastocyanin (105 aa).

The Plastocyanin-like domain maps to 1–105 (ETYTVKLGSD…GMVGKITVAG (105 aa)). Cu(2+) contacts are provided by His-39, Cys-89, His-92, and Met-97.

The protein belongs to the plastocyanin family. Cu(2+) serves as cofactor.

The protein localises to the cellular thylakoid membrane. Participates in electron transfer between P700 and the cytochrome b6-f complex in photosystem I. This is Plastocyanin (petE) from Anabaena variabilis.